We begin with the raw amino-acid sequence, 129 residues long: Probable cytochrome b5 2 (129 aa).

In terms of domain architecture, Cytochrome b5 heme-binding spans 3–79; it reads EKTITVEEVL…LEKFYIGNLL (77 aa). Heme is bound by residues His-38 and His-62. Residues 105-125 traverse the membrane as a helical segment; that stretch reads VKPAMWLFVLVMVVAYFAFRK.

The protein belongs to the cytochrome b5 family.

It localises to the endoplasmic reticulum membrane. The protein localises to the microsome membrane. The protein resides in the mitochondrion. Functionally, membrane bound hemoprotein which function as an electron carrier for several membrane bound oxygenases. This is Probable cytochrome b5 2 (oca8) from Schizosaccharomyces pombe (strain 972 / ATCC 24843) (Fission yeast).